Reading from the N-terminus, the 244-residue chain is Ureidoacrylate amidohydrolase RutB (244 aa).

D38 (proton acceptor) is an active-site residue. Residue K147 is part of the active site. The Nucleophile role is filled by C180.

This sequence belongs to the isochorismatase family. RutB subfamily.

It carries out the reaction (Z)-3-ureidoacrylate + H2O + H(+) = (Z)-3-aminoacrylate + NH4(+) + CO2. The enzyme catalyses (Z)-3-ureidoacrylate + H2O = (Z)-3-aminoacrylate + carbamate + H(+). It catalyses the reaction (Z)-2-methylureidoacrylate + H2O + H(+) = (Z)-2-methylaminoacrylate + NH4(+) + CO2. Hydrolyzes ureidoacrylate to form aminoacrylate and carbamate. The carbamate hydrolyzes spontaneously, thereby releasing one of the nitrogen atoms of the pyrimidine ring as ammonia and one of its carbon atoms as CO2. The protein is Ureidoacrylate amidohydrolase RutB of Shigella sonnei (strain Ss046).